Consider the following 279-residue polypeptide: MNIKIAKNAGFCFGVKRAMKMAWDEVEKNDSGIYALGPLIHNKQAVAKYEEKGLKTVNEIDTIPNHENMIIRSHGVPENIYKEAKDKKLKIVDTTCPFVKKIHTVVSEYHNKGYEIIVIGDMKHPEVIGINGWCENSAIIIKTLEQMENMEFDNSKRYCLVAQTTINPELYISIVNKLSDKLEEIVFNDTICSATKTRQESAKELAKEVDCMIVIGGKHSSNTQKLVKVCEDLVPTFAIETKDELDVNTLKKYKNLGITAGASTPNWIIEEVVTFLENL.

Residue Cys12 coordinates [4Fe-4S] cluster. (2E)-4-hydroxy-3-methylbut-2-enyl diphosphate-binding residues include His41 and His74. Dimethylallyl diphosphate contacts are provided by His41 and His74. The isopentenyl diphosphate site is built by His41 and His74. Residue Cys96 coordinates [4Fe-4S] cluster. His124 contacts (2E)-4-hydroxy-3-methylbut-2-enyl diphosphate. His124 provides a ligand contact to dimethylallyl diphosphate. His124 contributes to the isopentenyl diphosphate binding site. The Proton donor role is filled by Glu126. Thr164 contacts (2E)-4-hydroxy-3-methylbut-2-enyl diphosphate. Cys192 is a binding site for [4Fe-4S] cluster. Ser220, Ser221, Asn222, and Ser263 together coordinate (2E)-4-hydroxy-3-methylbut-2-enyl diphosphate. Residues Ser220, Ser221, Asn222, and Ser263 each coordinate dimethylallyl diphosphate. Positions 220, 221, 222, and 263 each coordinate isopentenyl diphosphate.

It belongs to the IspH family. Requires [4Fe-4S] cluster as cofactor.

It carries out the reaction isopentenyl diphosphate + 2 oxidized [2Fe-2S]-[ferredoxin] + H2O = (2E)-4-hydroxy-3-methylbut-2-enyl diphosphate + 2 reduced [2Fe-2S]-[ferredoxin] + 2 H(+). The catalysed reaction is dimethylallyl diphosphate + 2 oxidized [2Fe-2S]-[ferredoxin] + H2O = (2E)-4-hydroxy-3-methylbut-2-enyl diphosphate + 2 reduced [2Fe-2S]-[ferredoxin] + 2 H(+). It participates in isoprenoid biosynthesis; dimethylallyl diphosphate biosynthesis; dimethylallyl diphosphate from (2E)-4-hydroxy-3-methylbutenyl diphosphate: step 1/1. Its pathway is isoprenoid biosynthesis; isopentenyl diphosphate biosynthesis via DXP pathway; isopentenyl diphosphate from 1-deoxy-D-xylulose 5-phosphate: step 6/6. Its function is as follows. Catalyzes the conversion of 1-hydroxy-2-methyl-2-(E)-butenyl 4-diphosphate (HMBPP) into a mixture of isopentenyl diphosphate (IPP) and dimethylallyl diphosphate (DMAPP). Acts in the terminal step of the DOXP/MEP pathway for isoprenoid precursor biosynthesis. The sequence is that of 4-hydroxy-3-methylbut-2-enyl diphosphate reductase from Clostridioides difficile (strain 630) (Peptoclostridium difficile).